Reading from the N-terminus, the 60-residue chain is Cytotoxin 4 (60 aa).

Disulfide bonds link Cys3–Cys21, Cys14–Cys38, Cys42–Cys53, and Cys54–Cys59.

The protein belongs to the three-finger toxin family. Short-chain subfamily. Type IA cytotoxin sub-subfamily. As to quaternary structure, monomer in solution; Homodimer and oligomer in the presence of negatively charged lipids forming a pore with a size ranging between 20 and 30 Angstroms. As to expression, expressed by the venom gland.

The protein localises to the secreted. It localises to the target cell membrane. Functionally, shows cytolytic activity on many different cells by forming pore in lipid membranes. In vivo, increases heart rate or kills the animal by cardiac arrest. In addition, it binds to heparin with high affinity, interacts with Kv channel-interacting protein 1 (KCNIP1) in a calcium-independent manner, and binds to integrin alpha-V/beta-3 (ITGAV/ITGB3) with moderate affinity. This chain is Cytotoxin 4, found in Naja annulifera (Banded Egyptian cobra).